Reading from the N-terminus, the 311-residue chain is Protein translocase subunit SecF (311 aa).

6 consecutive transmembrane segments (helical) span residues 19 to 39 (AIYA…TQGL), 142 to 162 (MLAM…RFEL), 166 to 186 (LGAV…FSVL), 192 to 212 (LVVV…TIVV), 245 to 265 (ITSL…GAVI), and 272 to 292 (LLFG…PLVL).

It belongs to the SecD/SecF family. SecF subfamily. In terms of assembly, forms a complex with SecD. Part of the essential Sec protein translocation apparatus which comprises SecA, SecYEG and auxiliary proteins SecDF-YajC and YidC.

It localises to the cell inner membrane. Part of the Sec protein translocase complex. Interacts with the SecYEG preprotein conducting channel. SecDF uses the proton motive force (PMF) to complete protein translocation after the ATP-dependent function of SecA. The sequence is that of Protein translocase subunit SecF from Magnetococcus marinus (strain ATCC BAA-1437 / JCM 17883 / MC-1).